The following is a 594-amino-acid chain: DNA ligase (594 aa).

Glu256 contributes to the ATP binding site. Residue Lys258 is the N6-AMP-lysine intermediate of the active site. Residues Arg263, Arg279, Glu309, Phe349, Arg426, and Lys432 each coordinate ATP.

This sequence belongs to the ATP-dependent DNA ligase family. The cofactor is Mg(2+).

The enzyme catalyses ATP + (deoxyribonucleotide)n-3'-hydroxyl + 5'-phospho-(deoxyribonucleotide)m = (deoxyribonucleotide)n+m + AMP + diphosphate.. Functionally, DNA ligase that seals nicks in double-stranded DNA during DNA replication, DNA recombination and DNA repair. The chain is DNA ligase from Ignicoccus hospitalis (strain KIN4/I / DSM 18386 / JCM 14125).